Here is a 306-residue protein sequence, read N- to C-terminus: Small ribosomal subunit biogenesis GTPase RsgA (306 aa).

Positions 77–236 (KNELKRPNVA…IVDTPGFSKL (160 aa)) constitute a CP-type G domain. GTP contacts are provided by residues 126-129 (SKID) and 179-187 (GQTGVGKST). Residues Cys-260, Cys-266, His-268, and Cys-274 each coordinate Zn(2+).

This sequence belongs to the TRAFAC class YlqF/YawG GTPase family. RsgA subfamily. As to quaternary structure, monomer. Associates with 30S ribosomal subunit, binds 16S rRNA. It depends on Zn(2+) as a cofactor.

The protein resides in the cytoplasm. Functionally, one of several proteins that assist in the late maturation steps of the functional core of the 30S ribosomal subunit. Helps release RbfA from mature subunits. May play a role in the assembly of ribosomal proteins into the subunit. Circularly permuted GTPase that catalyzes slow GTP hydrolysis, GTPase activity is stimulated by the 30S ribosomal subunit. The protein is Small ribosomal subunit biogenesis GTPase RsgA of Onion yellows phytoplasma (strain OY-M).